A 328-amino-acid chain; its full sequence is D-cysteine desulfhydrase (328 aa).

K51 is modified (N6-(pyridoxal phosphate)lysine).

Belongs to the ACC deaminase/D-cysteine desulfhydrase family. In terms of assembly, homodimer. Pyridoxal 5'-phosphate serves as cofactor.

It carries out the reaction D-cysteine + H2O = hydrogen sulfide + pyruvate + NH4(+) + H(+). Its function is as follows. Catalyzes the alpha,beta-elimination reaction of D-cysteine and of several D-cysteine derivatives. It could be a defense mechanism against D-cysteine. This is D-cysteine desulfhydrase from Escherichia coli O157:H7.